A 72-amino-acid chain; its full sequence is Exodeoxyribonuclease 7 small subunit (72 aa).

The protein belongs to the XseB family. In terms of assembly, heterooligomer composed of large and small subunits.

It is found in the cytoplasm. It carries out the reaction Exonucleolytic cleavage in either 5'- to 3'- or 3'- to 5'-direction to yield nucleoside 5'-phosphates.. Functionally, bidirectionally degrades single-stranded DNA into large acid-insoluble oligonucleotides, which are then degraded further into small acid-soluble oligonucleotides. This Chlamydia trachomatis serovar L2 (strain ATCC VR-902B / DSM 19102 / 434/Bu) protein is Exodeoxyribonuclease 7 small subunit.